Consider the following 364-residue polypeptide: Histidinol-phosphate aminotransferase (364 aa).

A disordered region spans residues 1-46; the sequence is MQPRDLSDHSPYVPGRGVEEVARDRGLDPDDLIKLSSNENPHGPSP. Residues 17 to 33 are compositionally biased toward basic and acidic residues; the sequence is GVEEVARDRGLDPDDLI. Lys-222 carries the N6-(pyridoxal phosphate)lysine modification.

It belongs to the class-II pyridoxal-phosphate-dependent aminotransferase family. Histidinol-phosphate aminotransferase subfamily. Pyridoxal 5'-phosphate is required as a cofactor.

It catalyses the reaction L-histidinol phosphate + 2-oxoglutarate = 3-(imidazol-4-yl)-2-oxopropyl phosphate + L-glutamate. It participates in amino-acid biosynthesis; L-histidine biosynthesis; L-histidine from 5-phospho-alpha-D-ribose 1-diphosphate: step 7/9. The sequence is that of Histidinol-phosphate aminotransferase from Halorubrum lacusprofundi (strain ATCC 49239 / DSM 5036 / JCM 8891 / ACAM 34).